A 65-amino-acid polypeptide reads, in one-letter code: Large ribosomal subunit protein bL33c (65 aa).

This sequence belongs to the bacterial ribosomal protein bL33 family.

The protein localises to the plastid. The protein resides in the chloroplast. In Porphyra purpurea (Red seaweed), this protein is Large ribosomal subunit protein bL33c (rpl33).